Consider the following 361-residue polypeptide: Collagenase (361 aa).

It belongs to the peptidase U32 family. Homodimer. Requires a metal cation as cofactor.

Its activity is regulated as follows. Activity somewhat enhanced by calcium ions, inhibited by zinc and Fe(3+) ions and by p-chloromercuribenzoic acid and EDTA. Activity is enhanced by salivary peptide cystatin and reduced by salivary peptide histatin. Its function is as follows. Has collagenase activity. Active on soluble collagen, reconstituted type I collagen, heat denatured type I collagen and azocoll, but not gelatin or the synthetic bacterial collagenase substrate PZ-PLGPA. May play a role in virulence. This chain is Collagenase, found in Porphyromonas gingivalis (Bacteroides gingivalis).